The following is a 134-amino-acid chain: FK506-binding protein 2 (134 aa).

Residues 1–19 (MRILLLSALFLSLTTLVLS) form the signal peptide. Residues 39 to 127 (GDTVHMHYRG…IFETELVQIE (89 aa)) enclose the PPIase FKBP-type domain. Residues 131 to 134 (NDEL) carry the Prevents secretion from ER motif.

The protein belongs to the FKBP-type PPIase family. FKBP2 subfamily.

It is found in the endoplasmic reticulum. The enzyme catalyses [protein]-peptidylproline (omega=180) = [protein]-peptidylproline (omega=0). With respect to regulation, inhibited by both FK506 and rapamycin. Functionally, PPIases accelerate the folding of proteins. It catalyzes the cis-trans isomerization of proline imidic peptide bonds in oligopeptides. The chain is FK506-binding protein 2 (fpr2) from Aspergillus fumigatus (strain ATCC MYA-4609 / CBS 101355 / FGSC A1100 / Af293) (Neosartorya fumigata).